Reading from the N-terminus, the 226-residue chain is Probable septum site-determining protein MinC (226 aa).

The protein belongs to the MinC family. As to quaternary structure, interacts with MinD and FtsZ.

Functionally, cell division inhibitor that blocks the formation of polar Z ring septums. Rapidly oscillates between the poles of the cell to destabilize FtsZ filaments that have formed before they mature into polar Z rings. Prevents FtsZ polymerization. The sequence is that of Probable septum site-determining protein MinC from Edwardsiella ictaluri (strain 93-146).